We begin with the raw amino-acid sequence, 367 residues long: NADH-quinone oxidoreductase subunit H (367 aa).

The next 8 membrane-spanning stretches (helical) occupy residues 18–38, 87–107, 132–152, 180–200, 204–224, 257–277, 291–311, and 328–348; these read VLLF…VAYL, LCFL…WAVI, IGVL…IIAG, LTIV…IVIA, MPYW…ISAL, FFLG…IFFF, IIPG…CFIW, and GWKV…GILV.

It belongs to the complex I subunit 1 family. As to quaternary structure, NDH-1 is composed of 14 different subunits. Subunits NuoA, H, J, K, L, M, N constitute the membrane sector of the complex.

Its subcellular location is the cell inner membrane. It catalyses the reaction a quinone + NADH + 5 H(+)(in) = a quinol + NAD(+) + 4 H(+)(out). Functionally, NDH-1 shuttles electrons from NADH, via FMN and iron-sulfur (Fe-S) centers, to quinones in the respiratory chain. The immediate electron acceptor for the enzyme in this species is believed to be ubiquinone. Couples the redox reaction to proton translocation (for every two electrons transferred, four hydrogen ions are translocated across the cytoplasmic membrane), and thus conserves the redox energy in a proton gradient. This subunit may bind ubiquinone. The polypeptide is NADH-quinone oxidoreductase subunit H (Ehrlichia ruminantium (strain Gardel)).